Here is a 360-residue protein sequence, read N- to C-terminus: MSGRRKGCSAATASSSSSSPPSRLPPLPGHARRPRRKRCLVPEVFCTRDLADLCVRRDYEGLRRYLRRFEGSCVSLGWPSQCIYVVGGEHSPHSLTEIDLEHCQNDFFGEFRALHLIGTVSHATCRYQVFVDAYGAVFAYDAQEDCLYELASDLAGFFAKGMIRCDPVHESICARLQPNVPLVHPDHRAELCRRSRASARGRYLRSLLAFRELLACEDTAARCAYVEAHREAQLTLIWPEKHSLVLRTARDLGLSASMLRRFQRSLYTREPVMPLGEIEGAEDKTFFHRVRILCGDTGTVYAALVGQDKLVRLARDLRGFVRVGLALLIDDFRYESIGPVDRSSLYEANPELRLPFKKRR.

A disordered region spans residues 1–33 (MSGRRKGCSAATASSSSSSPPSRLPPLPGHARR).

This sequence belongs to the herpesviridae US22 family.

This is an uncharacterized protein from Human cytomegalovirus (strain AD169) (HHV-5).